The following is a 490-amino-acid chain: E3 ubiquitin-protein ligase Hakai (490 aa).

Residues 34-60 are disordered; that stretch reads QANKAKPAPRTQRTINRMPAKAPPGDE. An RING-type zinc finger spans residues 108 to 148; that stretch reads CDKCGLPIKIYGRMIPCKHVFCYDCAILHEKKGDKMCPGCS. The interval 147–205 is HYB domain; it reads CSDPVQRIEQCTRGSLFMCSIVQGCKRTYLSQRDLQAHINHRHMRAGKPVTRASLENVH. The C2H2-type zinc finger occupies 163–189; the sequence is FMCSIVQGCKRTYLSQRDLQAHINHRH. S200, S284, and S289 each carry phosphoserine. The segment at 254-490 is disordered; the sequence is QPHEDIRAPP…DQTRYRPYYQ (237 aa). Composition is skewed to pro residues over residues 341–358, 371–388, and 398–422; these read APPPPPPPPISHPMPHPP, APPPPMTSAPPPITPPPG, and MNHPPPGPPPPQHGGPPVTAPPPHH. Polar residues predominate over residues 426-441; sequence NSLPQFTEDQGTLSPP. Positions 456 to 477 are enriched in pro residues; sequence PRGPPPPPRLQGPPSQTPLPGP.

This sequence belongs to the Hakai family. Homodimer. Interacts with tyrosine-phosphorylated SRC substrates. Component of the WMM complex, a N6-methyltransferase complex composed of a catalytic subcomplex, named MAC, and of an associated subcomplex, named MACOM. The MAC subcomplex is composed of METTL3 and METTL14. The MACOM subcomplex is composed of WTAP, ZC3H13, CBLL1/HAKAI, VIRMA, and, in some cases of RBM15 (RBM15 or RBM15B). Also a component of a MACOM-like complex, named WTAP complex, composed of WTAP, ZC3H13, CBLL1, VIRMA, RBM15, BCLAF1 and THRAP3. Post-translationally, phosphorylated on tyrosine residues.

The protein localises to the nucleus speckle. Its subcellular location is the nucleus. It localises to the nucleoplasm. The protein resides in the cytoplasm. It catalyses the reaction S-ubiquitinyl-[E2 ubiquitin-conjugating enzyme]-L-cysteine + [acceptor protein]-L-lysine = [E2 ubiquitin-conjugating enzyme]-L-cysteine + N(6)-ubiquitinyl-[acceptor protein]-L-lysine.. Its pathway is protein modification; protein ubiquitination. In terms of biological role, E3 ubiquitin-protein ligase that mediates ubiquitination of several tyrosine-phosphorylated Src substrates, including CDH1, CTTN and DOK1. Targets CDH1 for endocytosis and degradation. Associated component of the WMM complex, a complex that mediates N6-methyladenosine (m6A) methylation of RNAs, a modification that plays a role in the efficiency of mRNA splicing and RNA processing. Its function in the WMM complex is unknown. The protein is E3 ubiquitin-protein ligase Hakai of Macaca fascicularis (Crab-eating macaque).